Reading from the N-terminus, the 115-residue chain is MSERPPEKTLAELASPNHECRACGYVYIPSQGDQKTSVSPGTPFEALPLNWKCPVCGAPRNYFISTGETDAPSGFAENLNYGFGFNRMSGGKKNLLIFGSLFVIFLFFLSLYGMG.

In terms of domain architecture, Rubredoxin-like spans Ser15 to Thr66. The Fe cation site is built by Cys20, Cys23, Cys53, and Cys56.

Belongs to the rubredoxin family. Fe(3+) serves as cofactor.

Rubredoxin is a small nonheme, iron protein lacking acid-labile sulfide. Its single Fe, chelated to 4 Cys, functions as an electron acceptor and may also stabilize the conformation of the molecule. Could be involved in hydrogenase-linked redox processes. The polypeptide is Rubredoxin (rub) (Synechocystis sp. (strain ATCC 27184 / PCC 6803 / Kazusa)).